Here is a 58-residue protein sequence, read N- to C-terminus: U8-ctenitoxin-Pk1a (58 aa).

Disulfide bonds link Cys-2–Cys-16, Cys-9–Cys-22, Cys-15–Cys-40, Cys-24–Cys-38, and Cys-48–Cys-55.

In terms of tissue distribution, expressed by the venom gland.

It localises to the secreted. In terms of biological role, no toxic effects on mice at dose levels of 5 ug per mouse. May be toxic to insects. This chain is U8-ctenitoxin-Pk1a, found in Phoneutria keyserlingi (Brazilian wandering spider).